The chain runs to 113 residues: MEKVLVLLLVSLLAVAYAAPGPRGLIINLEDGEICLNSMQCKSRCCQHDTILGIARCTHKAMENSECSPKTLYGIYYRCPCERGLTCEGDRSIIGAITNTNYGICLDSRRSKQ.

A signal peptide spans 1 to 18 (MEKVLVLLLVSLLAVAYA). The propeptide at 19 to 23 (APGPR) is enterostatin, activation peptide. Cystine bridges form between Cys-35–Cys-46, Cys-41–Cys-57, Cys-45–Cys-79, Cys-67–Cys-87, and Cys-81–Cys-105.

This sequence belongs to the colipase family. As to quaternary structure, forms a 1:1 stoichiometric complex with pancreatic lipase. In terms of tissue distribution, expressed by the pancreas.

It is found in the secreted. In terms of biological role, colipase is a cofactor of pancreatic lipase. It allows the lipase to anchor itself to the lipid-water interface. Without colipase the enzyme is washed off by bile salts, which have an inhibitory effect on the lipase. Functionally, enterostatin has a biological activity as a satiety signal. The protein is Colipase of Mus musculus (Mouse).